The following is a 158-amino-acid chain: Troponin C, isoform 1 (158 aa).

N-acetylserine is present on serine 1. 4 EF-hand domains span residues 15-50, 51-86, 91-126, and 127-158; these read EQIV…MGIK, VSST…FLIE, AMMK…LDAR, and LTAE…MMTG. Residues aspartate 64, aspartate 66, serine 68, glutamine 70, and glutamate 75 each contribute to the Ca(2+) site. Residues aspartate 140, aspartate 142, serine 144, threonine 146, and glutamate 151 each contribute to the Ca(2+) site.

It belongs to the troponin C family.

Functionally, troponin is the central regulatory protein of striated muscle contraction. Tn consists of three components: Tn-I which is the inhibitor of actomyosin ATPase, Tn-T which contains the binding site for tropomyosin and Tn-C. The binding of calcium to Tn-C abolishes the inhibitory action of Tn on actin filaments. The sequence is that of Troponin C, isoform 1 from Balanus nubilus (Giant acorn barnacle).